The primary structure comprises 178 residues: Endoribonuclease YbeY (178 aa).

Zn(2+) contacts are provided by H118, H122, and H128.

Belongs to the endoribonuclease YbeY family. Zn(2+) serves as cofactor.

Its subcellular location is the cytoplasm. In terms of biological role, single strand-specific metallo-endoribonuclease involved in late-stage 70S ribosome quality control and in maturation of the 3' terminus of the 16S rRNA. In Mycolicibacterium gilvum (strain PYR-GCK) (Mycobacterium gilvum (strain PYR-GCK)), this protein is Endoribonuclease YbeY.